A 409-amino-acid chain; its full sequence is Elongation factor Tu, plastid (409 aa).

The tr-type G domain maps to 10–214 (KPHINIGTIG…KIDSYIPTPI (205 aa)). Residues 19–26 (GHVDHGKT) form a G1 region. 19-26 (GHVDHGKT) contributes to the GTP binding site. A Mg(2+)-binding site is contributed by Thr-26. A G2 region spans residues 60 to 64 (GITIN). The segment at 81 to 84 (DCPG) is G3. Residues 81 to 85 (DCPGH) and 136 to 139 (NKED) each bind GTP. A G4 region spans residues 136-139 (NKED). A G5 region spans residues 174–176 (SAL).

The protein belongs to the TRAFAC class translation factor GTPase superfamily. Classic translation factor GTPase family. EF-Tu/EF-1A subfamily.

Its subcellular location is the plastid. It catalyses the reaction GTP + H2O = GDP + phosphate + H(+). Its function is as follows. GTP hydrolase that promotes the GTP-dependent binding of aminoacyl-tRNA to the A-site of ribosomes during protein biosynthesis. This chain is Elongation factor Tu, plastid (tufA), found in Euglena longa (Euglenophycean alga).